Consider the following 250-residue polypeptide: NADH-quinone oxidoreductase subunit C (250 aa).

The protein belongs to the complex I 30 kDa subunit family. In terms of assembly, NDH-1 is composed of 14 different subunits. Subunits NuoB, C, D, E, F, and G constitute the peripheral sector of the complex.

It localises to the cell inner membrane. It carries out the reaction a quinone + NADH + 5 H(+)(in) = a quinol + NAD(+) + 4 H(+)(out). In terms of biological role, NDH-1 shuttles electrons from NADH, via FMN and iron-sulfur (Fe-S) centers, to quinones in the respiratory chain. The immediate electron acceptor for the enzyme in this species is believed to be ubiquinone. Couples the redox reaction to proton translocation (for every two electrons transferred, four hydrogen ions are translocated across the cytoplasmic membrane), and thus conserves the redox energy in a proton gradient. The protein is NADH-quinone oxidoreductase subunit C of Xylella fastidiosa (strain M23).